Reading from the N-terminus, the 460-residue chain is Putative E3 ubiquitin-protein ligase RING1b (460 aa).

The segment at 1–85 is disordered; sequence MPSLKSFSAA…SQSSSAGELS (85 aa). The segment covering 21-31 has biased composition (basic and acidic residues); the sequence is SEAERFNPEAV. Composition is skewed to acidic residues over residues 32 to 51 and 59 to 71; these read EKEEDPDKMDEKDESGDEED and EAEDEEALGEEED. The segment at 103-143 adopts an RING-type zinc-finger fold; the sequence is CSICLGIIRKTRTVMECLHRFCRECIDKSMRLGNNECPTCR. Positions 196–300 are disordered; the sequence is QVSQRQSKAL…TEQTHQRDSR (105 aa). Residues 220-234 are compositionally biased toward basic residues; the sequence is RSRRSGGGSRRRRNC. Residues 240–249 show a composition bias toward acidic residues; that stretch reads DTSEANDDDD. Basic and acidic residues predominate over residues 250-265; that stretch reads QNKRGKDSSSDEPCER. Residues 276–290 show a composition bias toward low complexity; it reads SSSNANNNDNCAGNG.

Heterodimer with RING1A. Interacts with CLF. Component of the PRC1-like complex, at least composed of RING1A, RING1B and LHP1.

The protein localises to the nucleus. It carries out the reaction S-ubiquitinyl-[E2 ubiquitin-conjugating enzyme]-L-cysteine + [acceptor protein]-L-lysine = [E2 ubiquitin-conjugating enzyme]-L-cysteine + N(6)-ubiquitinyl-[acceptor protein]-L-lysine.. The protein operates within protein modification; protein ubiquitination. Functionally, putative E3 ubiquitin-protein ligase that mediates monoubiquitination of 'Lys-119' of histone H2A (H2AK119ub), thereby playing a central role in histone code and gene regulation. In terms of biological role, as part of the PRC1-like complex, repress class I KNOX gene expression. PcG PRC1 complex maintains the transcriptionally repressive state of many genes, including Hox genes, throughout development. PcG PRC1 complex acts via chromatin remodeling and modification of histones, rendering chromatin heritably changed in its expressibility. The protein is Putative E3 ubiquitin-protein ligase RING1b (RING1B) of Arabidopsis thaliana (Mouse-ear cress).